An 89-amino-acid chain; its full sequence is MSITAFDTKIPQEFSHSFLVDFSGLFQYLLRPLSEIDENVRWFGRRFEDYLLALQVNVHDRSGLYPQCIPYLFGMTICPFEEVLTFGII.

This is an uncharacterized protein from Archaeoglobus fulgidus (strain ATCC 49558 / DSM 4304 / JCM 9628 / NBRC 100126 / VC-16).